A 250-amino-acid polypeptide reads, in one-letter code: Sperm-egg fusion protein Juno (250 aa).

An N-terminal signal peptide occupies residues 1 to 19 (MACWWPLLLELWTVMPTWA). 8 disulfide bridges follow: Cys-27/Cys-55, Cys-47/Cys-95, Cys-56/Cys-99, Cys-79/Cys-172, Cys-86/Cys-143, Cys-132/Cys-206, Cys-136/Cys-186, and Cys-149/Cys-166. The segment at 62–81 (WEAHLDVSPLYNFSLFHCGL) is important for interaction with IZUMO1. An N-linked (GlcNAc...) asparagine glycan is attached at Asn-73. Ser-228 carries the GPI-anchor amidated serine lipid modification. Residues 229-250 (SAPSWELSYTIMVCSLFLPFLS) constitute a propeptide that is removed on maturation.

It belongs to the folate receptor family. As to quaternary structure, monomer. Interacts with IZUMO1; the interaction is direct. IZUMO1 and IZUMO1R/JUNO form a complex with 1:1 stoichiometry. Interacts with FCRL3/MAIA; FCRL3/MAIA replaces IZUMO1R/JUNO as IZUMO1 receptor after sperm-egg adhesion, thereby permitting species-specific gamete fusion. Interacts with WDR54. Post-translationally, the protein is rapidly cleaved following fertilization, being only weakly detectable in zona-intact fertilized eggs at telophase II and undetectable at the pronuclear stage. Sheding is probably required to block to polyspermy and ensuring egg fusion with a single sperm. In terms of tissue distribution, expressed in unfertilized oocytes (at protein level).

The protein localises to the cell membrane. It is found in the cell projection. Its subcellular location is the microvillus membrane. Receptor for IZUMO1 present at the cell surface of oocytes (oolemma), which is essential for species-specific gamete recognition and fertilization. The IZUMO1:IZUMO1R/JUNO interaction is a necessary adhesion event between sperm and egg that is required for fertilization but is not sufficient for cell fusion. The ligand-receptor interaction probably does not act as a membrane 'fusogen'. Does not bind folate. This is Sperm-egg fusion protein Juno from Homo sapiens (Human).